The sequence spans 493 residues: Probable cytosol aminopeptidase (493 aa).

Lys257 and Asp262 together coordinate Mn(2+). Lys269 is an active-site residue. Mn(2+) is bound by residues Asp281, Asp341, and Glu343. Arg345 is an active-site residue.

Belongs to the peptidase M17 family. Requires Mn(2+) as cofactor.

It localises to the cytoplasm. It carries out the reaction Release of an N-terminal amino acid, Xaa-|-Yaa-, in which Xaa is preferably Leu, but may be other amino acids including Pro although not Arg or Lys, and Yaa may be Pro. Amino acid amides and methyl esters are also readily hydrolyzed, but rates on arylamides are exceedingly low.. The enzyme catalyses Release of an N-terminal amino acid, preferentially leucine, but not glutamic or aspartic acids.. In terms of biological role, presumably involved in the processing and regular turnover of intracellular proteins. Catalyzes the removal of unsubstituted N-terminal amino acids from various peptides. The polypeptide is Probable cytosol aminopeptidase (Prochlorococcus marinus (strain MIT 9211)).